The sequence spans 302 residues: Phospho-N-acetylmuramoyl-pentapeptide-transferase (302 aa).

10 helical membrane passes run 1–21 (MIAANFLLNLFLYPILIKLFR), 42–62 (GTPTMGGILFVLTGFLFGMIS), 67–87 (MVLLGMFLFFLIGFLDDFLSV), 95–115 (LKTYQKALLQTLAAFIMLLLI), 123–143 (FFGSTIEMGKWYYLFALLVIV), 154–174 (GLDGLAGWIYVSGSIPYWFFL), 178–198 (GVSEDILLILGVGVLAFLVFN), 204–224 (IFMGDTGSITLGGVLGTVSVL), 229–249 (FYLVLFFMIPVIETLSVILQV), and 279–299 (IVAVFTVFNLISSLVALEIFG).

This sequence belongs to the glycosyltransferase 4 family. MraY subfamily. Mg(2+) serves as cofactor.

It is found in the cell inner membrane. The enzyme catalyses UDP-N-acetyl-alpha-D-muramoyl-L-alanyl-gamma-D-glutamyl-meso-2,6-diaminopimeloyl-D-alanyl-D-alanine + di-trans,octa-cis-undecaprenyl phosphate = di-trans,octa-cis-undecaprenyl diphospho-N-acetyl-alpha-D-muramoyl-L-alanyl-D-glutamyl-meso-2,6-diaminopimeloyl-D-alanyl-D-alanine + UMP. Its pathway is cell wall biogenesis; peptidoglycan biosynthesis. Its function is as follows. Catalyzes the initial step of the lipid cycle reactions in the biosynthesis of the cell wall peptidoglycan: transfers peptidoglycan precursor phospho-MurNAc-pentapeptide from UDP-MurNAc-pentapeptide onto the lipid carrier undecaprenyl phosphate, yielding undecaprenyl-pyrophosphoryl-MurNAc-pentapeptide, known as lipid I. This Thermotoga maritima (strain ATCC 43589 / DSM 3109 / JCM 10099 / NBRC 100826 / MSB8) protein is Phospho-N-acetylmuramoyl-pentapeptide-transferase.